Reading from the N-terminus, the 1009-residue chain is Probable beta-galactosidase B (1009 aa).

The first 27 residues, 1 to 27, serve as a signal peptide directing secretion; it reads MKTIAGLSWISALSSLASLPNGLGVSA. Residue Y96 participates in substrate binding. N106 carries N-linked (GlcNAc...) asparagine glycosylation. The substrate site is built by N141, A142, E143, and N201. The active-site Proton donor is the E202. Y271 serves as a coordination point for substrate. The cysteines at positions 277 and 330 are disulfide-linked. The Nucleophile role is filled by E314. Residue Y379 participates in substrate binding. N-linked (GlcNAc...) asparagine glycans are attached at residues N467, N495, N547, N593, N632, N672, N707, N775, N782, N789, N795, and N914.

This sequence belongs to the glycosyl hydrolase 35 family.

The protein localises to the secreted. The catalysed reaction is Hydrolysis of terminal non-reducing beta-D-galactose residues in beta-D-galactosides.. Its function is as follows. Cleaves beta-linked terminal galactosyl residues from gangliosides, glycoproteins, and glycosaminoglycans. The polypeptide is Probable beta-galactosidase B (lacB) (Pyrenophora tritici-repentis (strain Pt-1C-BFP) (Wheat tan spot fungus)).